We begin with the raw amino-acid sequence, 569 residues long: Urease subunit alpha (569 aa).

One can recognise a Urease domain in the interval 131 to 569 (GGIDSHIHFI…LPLAQRYFLF (439 aa)). Ni(2+) is bound by residues H136, H138, and K219. K219 is subject to N6-carboxylysine. H221 is a substrate binding site. Ni(2+)-binding residues include H248 and H274. H322 serves as the catalytic Proton donor. D362 is a Ni(2+) binding site.

This sequence belongs to the metallo-dependent hydrolases superfamily. Urease alpha subunit family. As to quaternary structure, heterotrimer of UreA (gamma), UreB (beta) and UreC (alpha) subunits. Three heterotrimers associate to form the active enzyme. Ni cation serves as cofactor. In terms of processing, carboxylation allows a single lysine to coordinate two nickel ions.

It localises to the cytoplasm. It carries out the reaction urea + 2 H2O + H(+) = hydrogencarbonate + 2 NH4(+). It functions in the pathway nitrogen metabolism; urea degradation; CO(2) and NH(3) from urea (urease route): step 1/1. In Herpetosiphon aurantiacus (strain ATCC 23779 / DSM 785 / 114-95), this protein is Urease subunit alpha.